A 59-amino-acid polypeptide reads, in one-letter code: Movement protein TGBp3 (59 aa).

The Lumenal portion of the chain corresponds to 1–3; sequence MHL. Residues 4-21 form a helical membrane-spanning segment; that stretch reads AIVGALTLVLTLFVLHYT. The Cytoplasmic portion of the chain corresponds to 22 to 59; it reads TKDDRCYILINGHSAFTNCPASPDLAKVISQLKPHNHG.

Belongs to the Tymovirales TGBp3 protein family.

It localises to the host endoplasmic reticulum membrane. Functionally, plays a role in viral cell-to-cell propagation, by facilitating genome transport to neighboring plant cells through plasmosdesmata. May induce the formation of granular vesicles derived from the Endoplasmic reticulum, which align on actin filaments. The polypeptide is Movement protein TGBp3 (Chenopodium album (Fat hen)).